Consider the following 194-residue polypeptide: Imidazoleglycerol-phosphate dehydratase (194 aa).

This sequence belongs to the imidazoleglycerol-phosphate dehydratase family.

The protein resides in the cytoplasm. The enzyme catalyses D-erythro-1-(imidazol-4-yl)glycerol 3-phosphate = 3-(imidazol-4-yl)-2-oxopropyl phosphate + H2O. It functions in the pathway amino-acid biosynthesis; L-histidine biosynthesis; L-histidine from 5-phospho-alpha-D-ribose 1-diphosphate: step 6/9. This chain is Imidazoleglycerol-phosphate dehydratase, found in Thermoanaerobacter sp. (strain X514).